The primary structure comprises 297 residues: Nucleotide-binding protein Bphyt_0592 (297 aa).

Residue 8 to 15 (GISGSGKS) coordinates ATP. GTP is bound at residue 57 to 60 (DARS).

Belongs to the RapZ-like family.

Displays ATPase and GTPase activities. The chain is Nucleotide-binding protein Bphyt_0592 from Paraburkholderia phytofirmans (strain DSM 17436 / LMG 22146 / PsJN) (Burkholderia phytofirmans).